Reading from the N-terminus, the 279-residue chain is Thymidylate synthase 1 (279 aa).

A dUMP-binding site is contributed by 141–142 (RR). The active-site Nucleophile is cysteine 161. DUMP is bound by residues 181–184 (RSND), asparagine 192, and 222–224 (HVY). Aspartate 184 contacts (6R)-5,10-methylene-5,6,7,8-tetrahydrofolate. Alanine 278 contacts (6R)-5,10-methylene-5,6,7,8-tetrahydrofolate.

Belongs to the thymidylate synthase family. Bacterial-type ThyA subfamily. As to quaternary structure, homodimer.

The protein resides in the cytoplasm. It catalyses the reaction dUMP + (6R)-5,10-methylene-5,6,7,8-tetrahydrofolate = 7,8-dihydrofolate + dTMP. Its pathway is pyrimidine metabolism; dTTP biosynthesis. Functionally, catalyzes the reductive methylation of 2'-deoxyuridine-5'-monophosphate (dUMP) to 2'-deoxythymidine-5'-monophosphate (dTMP) while utilizing 5,10-methylenetetrahydrofolate (mTHF) as the methyl donor and reductant in the reaction, yielding dihydrofolate (DHF) as a by-product. This enzymatic reaction provides an intracellular de novo source of dTMP, an essential precursor for DNA biosynthesis. This Bacillus spizizenii (strain ATCC 23059 / NRRL B-14472 / W23) (Bacillus subtilis subsp. spizizenii) protein is Thymidylate synthase 1.